We begin with the raw amino-acid sequence, 273 residues long: Ethanolamine ammonia-lyase small subunit (273 aa).

Adenosylcob(III)alamin contacts are provided by Val-164, Glu-185, and Cys-214.

It belongs to the EutC family. As to quaternary structure, the basic unit is a heterodimer which dimerizes to form tetramers. The heterotetramers trimerize; 6 large subunits form a core ring with 6 small subunits projecting outwards. Requires adenosylcob(III)alamin as cofactor.

It is found in the bacterial microcompartment. It catalyses the reaction ethanolamine = acetaldehyde + NH4(+). It functions in the pathway amine and polyamine degradation; ethanolamine degradation. Functionally, catalyzes the deamination of various vicinal amino-alcohols to oxo compounds. Allows this organism to utilize ethanolamine as the sole source of nitrogen and carbon in the presence of external vitamin B12. This chain is Ethanolamine ammonia-lyase small subunit, found in Pseudomonas paraeruginosa (strain DSM 24068 / PA7) (Pseudomonas aeruginosa (strain PA7)).